A 224-amino-acid chain; its full sequence is Pyridoxal 5'-phosphate synthase subunit PdxT (224 aa).

An L-glutamine-binding site is contributed by 55-57; sequence GES. The active-site Nucleophile is the Cys-87. Residues Arg-113 and 142–143 contribute to the L-glutamine site; that span reads IR. Residues His-178 and Glu-180 each act as charge relay system in the active site.

The protein belongs to the glutaminase PdxT/SNO family. As to quaternary structure, in the presence of PdxS, forms a dodecamer of heterodimers. Only shows activity in the heterodimer.

It carries out the reaction aldehydo-D-ribose 5-phosphate + D-glyceraldehyde 3-phosphate + L-glutamine = pyridoxal 5'-phosphate + L-glutamate + phosphate + 3 H2O + H(+). It catalyses the reaction L-glutamine + H2O = L-glutamate + NH4(+). Its pathway is cofactor biosynthesis; pyridoxal 5'-phosphate biosynthesis. In terms of biological role, catalyzes the hydrolysis of glutamine to glutamate and ammonia as part of the biosynthesis of pyridoxal 5'-phosphate. The resulting ammonia molecule is channeled to the active site of PdxS. This chain is Pyridoxal 5'-phosphate synthase subunit PdxT, found in Syntrophus aciditrophicus (strain SB).